Reading from the N-terminus, the 439-residue chain is Protein ABHD8 (439 aa).

2 disordered regions span residues 54–75 and 122–148; these read HAGP…PGVK and ELAE…RPKR. The span at 58–67 shows a compositional bias: pro residues; sequence APIPTPPPPP. Over residues 138 to 148 the composition is skewed to basic residues; that stretch reads GRRRRPRRPKR. An AB hydrolase-1 domain is found at 169-271; sequence VLFFIHGVGG…HKVIMINGGG (103 aa). Catalysis depends on charge relay system residues S244, D362, and H390. The interval 415 to 439 is disordered; the sequence is EAEPKLEPKPKPQLLQPEPAPGEEK.

This sequence belongs to the AB hydrolase superfamily. In terms of assembly, interacts with NLRP3 (via NACHT and LLR domains); this interaction is enhanced in the presence of NLRP3 inflammasome inducers, such as ATP, nigericin, silica, or alum. Interacts with ZDHHC12.

It is found in the cytoplasm. Functionally, negatively regulates NLRP3-driven inflammation. Promotes NLRP3 degradation through the chaperone-mediated autophagy (CMA) pathway, hence attenuating inflammasome activation and IL1B secretion. Acts by recruiting palmitoyltransferase ZDHHC12 to NLRP3, facilitating NLRP3 palmitoylation and subsequent degradation. The protein is Protein ABHD8 of Mus musculus (Mouse).